The chain runs to 70 residues: Peptide Hp1035 (70 aa).

A signal peptide spans 1 to 23 (MKTQFVILLVALVLFQMFAQSEA). Phe-36 is subject to Phenylalanine amide. Positions 40–70 (GLQDLDMDDLDQLFDGEISQADINFLNQLMR) are excised as a propeptide.

Belongs to the non-disulfide-bridged peptide (NDBP) superfamily. Short antimicrobial peptide (group 4) family. As to expression, expressed by the venom gland.

The protein resides in the secreted. Its subcellular location is the target cell membrane. Functionally, amphipathic peptide with antimicrobial activity. This Heterometrus petersii (Asian forest scorpion) protein is Peptide Hp1035.